Here is a 319-residue protein sequence, read N- to C-terminus: ATP-dependent 6-phosphofructokinase (319 aa).

Gly-11 is an ATP binding site. Position 21–25 (21–25 (RAVVR)) interacts with ADP. Residues 72-73 (RC) and 102-105 (GEGS) contribute to the ATP site. Glu-103 lines the Mg(2+) pocket. Position 126-128 (126-128 (TID)) interacts with substrate. Asp-128 functions as the Proton acceptor in the catalytic mechanism. ADP is bound at residue Lys-155. Residues Arg-163 and 170–172 (MGR) each bind substrate. ADP-binding positions include 186-188 (GAE), Arg-212, and 214-216 (KIN). Substrate-binding positions include Glu-223, Arg-244, and 250–253 (HVQR).

The protein belongs to the phosphofructokinase type A (PFKA) family. ATP-dependent PFK group I subfamily. Prokaryotic clade 'B1' sub-subfamily. In terms of assembly, homotetramer. Mg(2+) serves as cofactor.

The protein resides in the cytoplasm. The enzyme catalyses beta-D-fructose 6-phosphate + ATP = beta-D-fructose 1,6-bisphosphate + ADP + H(+). Its pathway is carbohydrate degradation; glycolysis; D-glyceraldehyde 3-phosphate and glycerone phosphate from D-glucose: step 3/4. Allosterically activated by ADP and other diphosphonucleosides, and allosterically inhibited by phosphoenolpyruvate. Catalyzes the phosphorylation of D-fructose 6-phosphate to fructose 1,6-bisphosphate by ATP, the first committing step of glycolysis. This is ATP-dependent 6-phosphofructokinase from Thermotoga petrophila (strain ATCC BAA-488 / DSM 13995 / JCM 10881 / RKU-1).